The primary structure comprises 95 residues: Aspartyl/glutamyl-tRNA(Asn/Gln) amidotransferase subunit C (95 aa).

The protein belongs to the GatC family. Heterotrimer of A, B and C subunits.

It carries out the reaction L-glutamyl-tRNA(Gln) + L-glutamine + ATP + H2O = L-glutaminyl-tRNA(Gln) + L-glutamate + ADP + phosphate + H(+). The catalysed reaction is L-aspartyl-tRNA(Asn) + L-glutamine + ATP + H2O = L-asparaginyl-tRNA(Asn) + L-glutamate + ADP + phosphate + 2 H(+). Functionally, allows the formation of correctly charged Asn-tRNA(Asn) or Gln-tRNA(Gln) through the transamidation of misacylated Asp-tRNA(Asn) or Glu-tRNA(Gln) in organisms which lack either or both of asparaginyl-tRNA or glutaminyl-tRNA synthetases. The reaction takes place in the presence of glutamine and ATP through an activated phospho-Asp-tRNA(Asn) or phospho-Glu-tRNA(Gln). This is Aspartyl/glutamyl-tRNA(Asn/Gln) amidotransferase subunit C from Pseudomonas entomophila (strain L48).